A 202-amino-acid polypeptide reads, in one-letter code: Ras-related protein Rab-18 (202 aa).

GTP contacts are provided by serine 20, glycine 23, lysine 24, serine 25, serine 26, aspartate 37, proline 38, threonine 43, glycine 69, lysine 126, aspartate 128, and alanine 155. An Effector region motif is present at residues glutamine 40 to phenylalanine 48. The segment at arginine 183–cysteine 202 is disordered. The segment covering proline 191 to cysteine 202 has biased composition (polar residues). Residues cysteine 200 and cysteine 202 are each lipidated (S-geranylgeranyl cysteine). Cysteine 202 bears the Cysteine methyl ester mark.

It belongs to the small GTPase superfamily. Rab family.

The catalysed reaction is GTP + H2O = GDP + phosphate + H(+). The small GTPases Rab are key regulators of intracellular membrane trafficking, from the formation of transport vesicles to their fusion with membranes. Rabs cycle between an inactive GDP-bound form and an active GTP-bound form that is able to recruit to membranes different sets of downstream effectors directly responsible for vesicle formation, movement, tethering and fusion. Plays a role in apical endocytosis/recycling. May be implicated in transport between the plasma membrane and early endosomes. This is Ras-related protein Rab-18 (rab-18) from Caenorhabditis briggsae.